An 80-amino-acid polypeptide reads, in one-letter code: UPF0270 protein AHA_0994 (80 aa).

The protein belongs to the UPF0270 family.

The sequence is that of UPF0270 protein AHA_0994 from Aeromonas hydrophila subsp. hydrophila (strain ATCC 7966 / DSM 30187 / BCRC 13018 / CCUG 14551 / JCM 1027 / KCTC 2358 / NCIMB 9240 / NCTC 8049).